The sequence spans 494 residues: 4-trimethylaminobutyraldehyde dehydrogenase (494 aa).

N-acetylserine is present on S2. An N6-acetyllysine; alternate modification is found at K30. K30 carries the N6-succinyllysine; alternate modification. Residue K59 is modified to N6-succinyllysine. NAD(+) is bound by residues K180 and 232-236; that span reads GSVPT. The active-site Proton acceptor is E254. C288 acts as the Nucleophile in catalysis. An N6-acetyllysine modification is found at K298. E391 lines the NAD(+) pocket.

This sequence belongs to the aldehyde dehydrogenase family. In terms of assembly, homotetramer. Detected in lever (at protein level).

It is found in the cytoplasm. The protein localises to the cytosol. The catalysed reaction is 4-(trimethylamino)butanal + NAD(+) + H2O = 4-(trimethylamino)butanoate + NADH + 2 H(+). It catalyses the reaction an aldehyde + NAD(+) + H2O = a carboxylate + NADH + 2 H(+). It carries out the reaction 4-aminobutanal + NAD(+) + H2O = 4-aminobutanoate + NADH + 2 H(+). The enzyme catalyses formaldehyde + NAD(+) + H2O = formate + NADH + 2 H(+). The catalysed reaction is acetaldehyde + NAD(+) + H2O = acetate + NADH + 2 H(+). It catalyses the reaction imidazole-4-acetaldehyde + NAD(+) + H2O = imidazole-4-acetate + NADH + 2 H(+). It carries out the reaction acrolein + NAD(+) + H2O = acrylate + NADH + 2 H(+). The enzyme catalyses (5-hydroxyindol-3-yl)acetaldehyde + NAD(+) + H2O = (5-hydroxyindol-3-yl)acetate + NADH + 2 H(+). The catalysed reaction is 3,4-dihydroxyphenylacetaldehyde + NAD(+) + H2O = 3,4-dihydroxyphenylacetate + NADH + 2 H(+). It catalyses the reaction spermine monoaldehyde + NAD(+) + H2O = N-(2-carboxyethyl)spermidine + NADH + 2 H(+). It carries out the reaction propanal + NAD(+) + H2O = propanoate + NADH + 2 H(+). The enzyme catalyses butanal + NAD(+) + H2O = butanoate + NADH + 2 H(+). The catalysed reaction is pentanal + NAD(+) + H2O = pentanoate + NADH + 2 H(+). It catalyses the reaction hexanal + NAD(+) + H2O = hexanoate + NADH + 2 H(+). Its pathway is amine and polyamine biosynthesis; carnitine biosynthesis. Functionally, converts gamma-trimethylaminobutyraldehyde into gamma-butyrobetaine with high efficiency (in vitro). Can catalyze the irreversible oxidation of a broad range of aldehydes to the corresponding acids in an NAD-dependent reaction, but with low efficiency. Catalyzes the oxidation of aldehydes arising from biogenic amines and polyamines. The polypeptide is 4-trimethylaminobutyraldehyde dehydrogenase (Aldh9a1) (Rattus norvegicus (Rat)).